A 324-amino-acid chain; its full sequence is 2-oxoisovalerate dehydrogenase subunit beta (324 aa).

Residues Glu29, Leu58–Glu60, Gln82, and Tyr86–Pro89 contribute to the thiamine diphosphate site. Substrate is bound by residues Phe83 to Tyr86 and His129. The Proton acceptor role is filled by His129.

In terms of assembly, heterotetramer of two alpha and two beta chains. Directly associated with ODBA in the E1 complex. The cofactor is thiamine diphosphate.

The catalysed reaction is N(6)-[(R)-lipoyl]-L-lysyl-[protein] + 3-methyl-2-oxobutanoate + H(+) = N(6)-[(R)-S(8)-2-methylpropanoyldihydrolipoyl]-L-lysyl-[protein] + CO2. Its function is as follows. The branched-chain alpha-keto dehydrogenase complex catalyzes the overall conversion of alpha-keto acids to acyl-CoA and CO(2). It contains multiple copies of three enzymatic components: branched-chain alpha-keto acid decarboxylase (E1), lipoamide acyltransferase (E2) and lipoamide dehydrogenase (E3). The protein is 2-oxoisovalerate dehydrogenase subunit beta of Thermus thermophilus (strain ATCC BAA-163 / DSM 7039 / HB27).